A 74-amino-acid chain; its full sequence is Turripeptide OL135 (74 aa).

The first 20 residues, 1–20 (MKVPIVLMLVLLLIMPLSDG), serve as a signal peptide directing secretion. Residues 21 to 28 (YERKRXXX) constitute a propeptide that is removed on maturation.

It belongs to the conopeptide P-like superfamily. In terms of processing, contains 3 disulfide bonds. In terms of tissue distribution, expressed by the venom duct.

The protein resides in the secreted. Its function is as follows. Acts as a neurotoxin by inhibiting an ion channel. In Iotyrris olangoensis (Sea snail), this protein is Turripeptide OL135.